Consider the following 240-residue polypeptide: Type II restriction enzyme DdeI (240 aa).

The enzyme catalyses Endonucleolytic cleavage of DNA to give specific double-stranded fragments with terminal 5'-phosphates.. Functionally, a P subtype restriction enzyme that recognizes the double-stranded sequence 5'-CTNAG-3' and cleaves after C-1. This Desulfomicrobium norvegicum (strain DSM 1741 / NCIMB 8310) (Desulfovibrio baculatus (strain Norway 4)) protein is Type II restriction enzyme DdeI (ddeIR).